Reading from the N-terminus, the 514-residue chain is Na(+)/H(+) antiporter NhaB (514 aa).

12 consecutive transmembrane segments (helical) span residues 23 to 43, 63 to 83, 97 to 117, 120 to 140, 144 to 164, 202 to 222, 238 to 258, 303 to 323, 357 to 377, 391 to 411, 447 to 467, and 475 to 495; these read LALLVFLIINPFIFLANPFIA, PLLPGGLLAIEAVIIGMTSAA, LLLMFMVAGIYFMKQLLLFIF, LLLSIRSKMVLSLAFCVAAAF, FLDALTVVAVVISVAVGFYGI, LMMHAGVGTALGGVMTMVGEP, FFLRMSPVTVPVLVCGLLTCM, AVIGVWLVTALALHLAEVGLI, LTVFFSIVAVIIDQHLFAPII, LFYLFNGLLSSISDNVFVGTI, ATPNGQAAFLFLLTSALAPLI, and VWMALPYTIVLTLIGLLCVEF.

It belongs to the NhaB Na(+)/H(+) (TC 2.A.34) antiporter family.

The protein localises to the cell inner membrane. The catalysed reaction is 2 Na(+)(in) + 3 H(+)(out) = 2 Na(+)(out) + 3 H(+)(in). In terms of biological role, na(+)/H(+) antiporter that extrudes sodium in exchange for external protons. This Salmonella newport (strain SL254) protein is Na(+)/H(+) antiporter NhaB.